The sequence spans 218 residues: Eukaryotic translation initiation factor 3 subunit K (218 aa).

The 162-residue stretch at 44–205 (YDWGANLAVL…NIKTKNITEK (162 aa)) folds into the PCI domain.

This sequence belongs to the eIF-3 subunit K family. As to quaternary structure, component of the eukaryotic translation initiation factor 3 (eIF-3) complex.

The protein localises to the cytoplasm. Its function is as follows. Component of the eukaryotic translation initiation factor 3 (eIF-3) complex, which is involved in protein synthesis of a specialized repertoire of mRNAs and, together with other initiation factors, stimulates binding of mRNA and methionyl-tRNAi to the 40S ribosome. The eIF-3 complex specifically targets and initiates translation of a subset of mRNAs involved in cell proliferation. The chain is Eukaryotic translation initiation factor 3 subunit K from Bombyx mori (Silk moth).